The following is a 163-amino-acid chain: Cytochrome b6-f complex subunit 4 (163 aa).

The next 3 helical transmembrane spans lie at 36 to 56 (LLYI…GLAV), 95 to 115 (LLGV…PFLE), and 131 to 151 (TVFL…TLPI).

Belongs to the cytochrome b family. PetD subfamily. The 4 large subunits of the cytochrome b6-f complex are cytochrome b6, subunit IV (17 kDa polypeptide, petD), cytochrome f and the Rieske protein, while the 4 small subunits are petG, petL, petM and petN. The complex functions as a dimer.

The protein localises to the plastid. Its subcellular location is the chloroplast thylakoid membrane. Its function is as follows. Component of the cytochrome b6-f complex, which mediates electron transfer between photosystem II (PSII) and photosystem I (PSI), cyclic electron flow around PSI, and state transitions. The sequence is that of Cytochrome b6-f complex subunit 4 from Pelargonium hortorum (Common geranium).